Reading from the N-terminus, the 141-residue chain is Nucleoside diphosphate kinase (141 aa).

ATP contacts are provided by Lys-11, Phe-59, Arg-87, Thr-93, Arg-104, and Asn-114. Catalysis depends on His-117, which acts as the Pros-phosphohistidine intermediate.

It belongs to the NDK family. In terms of assembly, homotetramer. It depends on Mg(2+) as a cofactor.

Its subcellular location is the cytoplasm. It carries out the reaction a 2'-deoxyribonucleoside 5'-diphosphate + ATP = a 2'-deoxyribonucleoside 5'-triphosphate + ADP. It catalyses the reaction a ribonucleoside 5'-diphosphate + ATP = a ribonucleoside 5'-triphosphate + ADP. Major role in the synthesis of nucleoside triphosphates other than ATP. The ATP gamma phosphate is transferred to the NDP beta phosphate via a ping-pong mechanism, using a phosphorylated active-site intermediate. This Azoarcus sp. (strain BH72) protein is Nucleoside diphosphate kinase.